We begin with the raw amino-acid sequence, 400 residues long: Enoyl-[acyl-carrier-protein] reductase [NADH] 1 (400 aa).

Residues 48–53 (GASSGY), 74–75 (FE), 111–112 (DA), and 139–140 (LA) each bind NAD(+). Residue Tyr-225 coordinates substrate. The active-site Proton donor is Tyr-235. NAD(+) is bound by residues Lys-244 and 273-275 (VVT).

The protein belongs to the TER reductase family. As to quaternary structure, monomer.

The catalysed reaction is a 2,3-saturated acyl-[ACP] + NAD(+) = a (2E)-enoyl-[ACP] + NADH + H(+). Its pathway is lipid metabolism; fatty acid biosynthesis. Its function is as follows. Involved in the final reduction of the elongation cycle of fatty acid synthesis (FAS II). Catalyzes the reduction of a carbon-carbon double bond in an enoyl moiety that is covalently linked to an acyl carrier protein (ACP). In Vibrio parahaemolyticus serotype O3:K6 (strain RIMD 2210633), this protein is Enoyl-[acyl-carrier-protein] reductase [NADH] 1.